The primary structure comprises 231 residues: Putative carboxymethylenebutenolidase (231 aa).

Active-site residues include aspartate 169 and histidine 200.

It belongs to the dienelactone hydrolase family.

The enzyme catalyses 2-(5-oxo-2,5-dihydrofuran-2-ylidene)acetate + H2O = 4-oxohex-2-enedioate + H(+). This chain is Putative carboxymethylenebutenolidase, found in Azospirillum brasilense.